We begin with the raw amino-acid sequence, 281 residues long: Digeranylgeranylglyceryl phosphate synthase (281 aa).

5 helical membrane-spanning segments follow: residues 88–108 (IALS…EFLI), 132–152 (ALVS…AGNL), 200–220 (GILV…PVIF), 225–245 (IIYL…ASAI), and 261–281 (LIKV…FRVV).

The protein belongs to the UbiA prenyltransferase family. DGGGP synthase subfamily. Mg(2+) is required as a cofactor.

Its subcellular location is the cell membrane. It carries out the reaction sn-3-O-(geranylgeranyl)glycerol 1-phosphate + (2E,6E,10E)-geranylgeranyl diphosphate = 2,3-bis-O-(geranylgeranyl)-sn-glycerol 1-phosphate + diphosphate. Its pathway is membrane lipid metabolism; glycerophospholipid metabolism. Functionally, prenyltransferase that catalyzes the transfer of the geranylgeranyl moiety of geranylgeranyl diphosphate (GGPP) to the C2 hydroxyl of (S)-3-O-geranylgeranylglyceryl phosphate (GGGP). This reaction is the second ether-bond-formation step in the biosynthesis of archaeal membrane lipids. This chain is Digeranylgeranylglyceryl phosphate synthase, found in Korarchaeum cryptofilum (strain OPF8).